The sequence spans 283 residues: Bifunctional protein FolD (283 aa).

NADP(+)-binding positions include 165–167, serine 190, and valine 231; that span reads GRS.

Belongs to the tetrahydrofolate dehydrogenase/cyclohydrolase family. As to quaternary structure, homodimer.

The catalysed reaction is (6R)-5,10-methylene-5,6,7,8-tetrahydrofolate + NADP(+) = (6R)-5,10-methenyltetrahydrofolate + NADPH. The enzyme catalyses (6R)-5,10-methenyltetrahydrofolate + H2O = (6R)-10-formyltetrahydrofolate + H(+). It functions in the pathway one-carbon metabolism; tetrahydrofolate interconversion. In terms of biological role, catalyzes the oxidation of 5,10-methylenetetrahydrofolate to 5,10-methenyltetrahydrofolate and then the hydrolysis of 5,10-methenyltetrahydrofolate to 10-formyltetrahydrofolate. This chain is Bifunctional protein FolD, found in Anoxybacillus flavithermus (strain DSM 21510 / WK1).